The following is a 284-amino-acid chain: MDAIKKKMQMLKLDKENALDRAEQAEADKKGAEDKSKQLEDELVALQKKLKGTEDELDKYSEALKDAQEKLELSDKKATDAEGDVASLNRRIQLVEEELDRAQERLSTALQKLEEAEKAADESERGMKVIENRALKDEEKMELQEIQLKEAKHIAEEADRKYEEVARKLVIIEGDLERAEERAELSESKCAELEEELKTVTNNLKSLEAQAEKYSQKEDKYEEEIKVLTDKLKEAETRAEFAERTVAKLEKSIDDLEDELYAQKLKYKAISEELDHALNDMTSI.

The interval 1–38 is disordered; sequence MDAIKKKMQMLKLDKENALDRAEQAEADKKGAEDKSKQ. The stretch at 1 to 284 forms a coiled coil; the sequence is MDAIKKKMQM…DHALNDMTSI (284 aa). Over residues 12–38 the composition is skewed to basic and acidic residues; the sequence is KLDKENALDRAEQAEADKKGAEDKSKQ.

Belongs to the tropomyosin family. In terms of assembly, homodimer. Heterodimer of an alpha (TPM1, TPM3 or TPM4) and a beta (TPM2) chain.

It is found in the cytoplasm. It localises to the cytoskeleton. Its function is as follows. Binds to actin filaments in muscle and non-muscle cells. Plays a central role, in association with the troponin complex, in the calcium dependent regulation of vertebrate striated muscle contraction. Smooth muscle contraction is regulated by interaction with caldesmon. In non-muscle cells is implicated in stabilizing cytoskeleton actin filaments. The polypeptide is Tropomyosin alpha-1 chain (tpm1) (Xenopus laevis (African clawed frog)).